The primary structure comprises 306 residues: 3-methyl-2-oxobutanoate hydroxymethyltransferase (306 aa).

2 residues coordinate Mg(2+): Asp53 and Asp96. 3-methyl-2-oxobutanoate is bound by residues 53-54, Asp96, and Lys126; that span reads DS. Residue Glu128 coordinates Mg(2+). Glu195 serves as the catalytic Proton acceptor.

The protein belongs to the PanB family. Homodecamer; pentamer of dimers. Mg(2+) serves as cofactor.

It localises to the cytoplasm. It catalyses the reaction 3-methyl-2-oxobutanoate + (6R)-5,10-methylene-5,6,7,8-tetrahydrofolate + H2O = 2-dehydropantoate + (6S)-5,6,7,8-tetrahydrofolate. Its pathway is cofactor biosynthesis; (R)-pantothenate biosynthesis; (R)-pantoate from 3-methyl-2-oxobutanoate: step 1/2. Catalyzes the reversible reaction in which hydroxymethyl group from 5,10-methylenetetrahydrofolate is transferred onto alpha-ketoisovalerate to form ketopantoate. This chain is 3-methyl-2-oxobutanoate hydroxymethyltransferase, found in Anaeromyxobacter dehalogenans (strain 2CP-1 / ATCC BAA-258).